Consider the following 63-residue polypeptide: Crotasin (63 aa).

The first 22 residues, 1 to 22, serve as a signal peptide directing secretion; that stretch reads MKILYLLSAFLFLAFLSESGNA. 3 disulfides stabilise this stretch: C26-C56, C33-C50, and C38-C57.

Highly expressed in pancreas, heart, liver, brain and kidney. Expressed to a low extent in the venom gland.

It is found in the secreted. This chain is Crotasin, found in Crotalus durissus terrificus (South American rattlesnake).